Reading from the N-terminus, the 179-residue chain is ATP-dependent protease subunit HslV (179 aa).

Thr7 is an active-site residue. Na(+)-binding residues include Ala163, Cys166, and Thr169.

This sequence belongs to the peptidase T1B family. HslV subfamily. As to quaternary structure, a double ring-shaped homohexamer of HslV is capped on each side by a ring-shaped HslU homohexamer. The assembly of the HslU/HslV complex is dependent on binding of ATP.

It is found in the cytoplasm. The catalysed reaction is ATP-dependent cleavage of peptide bonds with broad specificity.. Allosterically activated by HslU binding. In terms of biological role, protease subunit of a proteasome-like degradation complex believed to be a general protein degrading machinery. The sequence is that of ATP-dependent protease subunit HslV from Amoebophilus asiaticus (strain 5a2).